A 764-amino-acid chain; its full sequence is Mitogen-activated protein kinase kinase kinase 1b (764 aa).

Disordered regions lie at residues 1–81 (MVEE…IQQQ), 120–260 (KSIA…TATR), 325–348 (PNLA…SSAM), and 360–392 (VPEL…HYGS). Residues 14-30 (GSWGSGEDGGSSHGGKG) show a composition bias toward gly residues. 2 stretches are compositionally biased toward low complexity: residues 60–76 (VHST…LSKS) and 125–135 (SQPLSSPSLSQ). Positions 136–145 (EHGEASHSND) are enriched in basic and acidic residues. A compositionally biased stretch (polar residues) spans 184–201 (YVNSQPQNHYGRKNSPSQ). The Protein kinase domain occupies 431–684 (WFKGDFIGSG…CDMLLTHPFI (254 aa)). ATP contacts are provided by residues 437 to 445 (IGSGTFGSV) and Lys459. Asp554 (proton acceptor) is an active-site residue. The segment at 706–764 (EERSIDVSESPSIATSSQSGSSPSVAGDAVSPASVAVRPRSMRTLRSEFSMSSPESIAS) is disordered. A compositionally biased stretch (low complexity) spans 715 to 729 (SPSIATSSQSGSSPS). The span at 752–764 (SEFSMSSPESIAS) shows a compositional bias: polar residues.

This sequence belongs to the protein kinase superfamily. STE Ser/Thr protein kinase family. MAP kinase kinase kinase subfamily.

The protein localises to the cell membrane. It catalyses the reaction L-seryl-[protein] + ATP = O-phospho-L-seryl-[protein] + ADP + H(+). The catalysed reaction is L-threonyl-[protein] + ATP = O-phospho-L-threonyl-[protein] + ADP + H(+). Its function is as follows. The CERK1, MEKK1a/b, MKK1a/b/c and MPK4a/b proteins are involved in pathogen defense. The pathway induces rapid growth inhibition, cell wall depositions and accumulation of defense-related transcripts. This protein is required for responses to chitin and acts redundantly with MEKK1a. The polypeptide is Mitogen-activated protein kinase kinase kinase 1b (MEKK1b) (Physcomitrium patens (Spreading-leaved earth moss)).